The chain runs to 562 residues: Septation ring formation regulator EzrA (562 aa).

At 1 to 2 the chain is on the extracellular side; sequence ME. Residues 3 to 21 form a helical membrane-spanning segment; the sequence is FVIGLLIVLLALFAAGYFF. Over 22–562 the chain is Cytoplasmic; sequence RKKIYAEIDR…VEKIKADISA (541 aa). Coiled coils occupy residues 377 to 425 and 470 to 497; these read YSLL…LKKT and MEEA…LVEQ.

The protein belongs to the EzrA family. May be degraded by FtsH protease.

It localises to the cell membrane. It is found in the membrane raft. Functionally, negative regulator of FtsZ ring formation; modulates the frequency and position of FtsZ ring formation. Inhibits FtsZ ring formation at polar sites. Interacts either with FtsZ or with one of its binding partners to promote depolymerization. The polypeptide is Septation ring formation regulator EzrA (Bacillus subtilis (strain 168)).